We begin with the raw amino-acid sequence, 229 residues long: 2,3-bisphosphoglycerate-dependent phosphoglycerate mutase (229 aa).

Substrate is bound by residues arginine 7–asparagine 14, threonine 20–glycine 21, arginine 59, glutamate 86–tyrosine 89, lysine 97, arginine 113–arginine 114, and glycine 182–asparagine 183. Histidine 8 functions as the Tele-phosphohistidine intermediate in the catalytic mechanism. Glutamate 86 acts as the Proton donor/acceptor in catalysis.

It belongs to the phosphoglycerate mutase family. BPG-dependent PGAM subfamily.

The enzyme catalyses (2R)-2-phosphoglycerate = (2R)-3-phosphoglycerate. Its pathway is carbohydrate degradation; glycolysis; pyruvate from D-glyceraldehyde 3-phosphate: step 3/5. In terms of biological role, catalyzes the interconversion of 2-phosphoglycerate and 3-phosphoglycerate. The sequence is that of 2,3-bisphosphoglycerate-dependent phosphoglycerate mutase from Listeria welshimeri serovar 6b (strain ATCC 35897 / DSM 20650 / CCUG 15529 / CIP 8149 / NCTC 11857 / SLCC 5334 / V8).